An 894-amino-acid polypeptide reads, in one-letter code: MNQIEPGVQYNYVYDEDEYMIQEEEWDRDLLLDPAWEKQQRKTFTAWCNSHLRKAGTQIENIEEDFRNGLKLMLLLEVISGERLPKPDRGKMRFHKIANVNKALDYIASKGVKLVSIGAEEIVDGNVKMTLGMIWTIILRFAIQDISVEETSAKEGLLLWCQRKTAPYRNVNIQNFHTSWKDGLGLCALIHRHRPDLIDYSKLNKDDPIGNINLAMEIAEKHLDIPKMLDAEDIVNTPKPDERAIMTYVSCFYHAFAGAEQAETAANRICKVLAVNQENERLMEEYERLASELLEWIRRTIPWLENRTPEKTMQAMQKKLEDFRDYRRKHKPPKVQEKCQLEINFNTLQTKLRISNRPAFMPSEGKMVSDIAGAWQRLEQAEKGYEEWLLNEIRRLERLEHLAEKFRQKASTHETWAYGKEQILLQKDYESASLTEVRALLRKHEAFESDLAAHQDRVEQIAAIAQELNELDYHDAVNVNDRCQKICDQWDRLGTLTQKRREALERMEKLLETIDQLHLEFAKRAAPFNNWMEGAMEDLQDMFIVHSIEEIQSLITAHEQFKATLPEADGERQSIMAIQNEVEKVIQSYNIRISSSNPYSTVTMDELRTKWDKVKQLVPIRDQSLQEELARQHANERLRRQFAAQANAIGPWIQNKMEEIARSSIQITGALEDQMNQLKQYEHNIINYKNNIDKLEGDHQLIQEALVFDNKHTNYTMEHIRVGWELLLTTIARTINEVETQILTRDAKGITQEQMNEFRASFNHFDRRKNGLMDHEDFRACLISMGYDLGEAEFARIMTLVDPNGQGTVTFQSFIDFMTRETADTDTAEQVIASFRILASDKPYILAEELRRELPPDQAQYCIKRMPAYSGPGSVPGALDYAAFSSALYGESDL.

The segment at 1-254 (MNQIEPGVQY…IMTYVSCFYH (254 aa)) is actin-binding. Calponin-homology (CH) domains lie at 38 to 142 (KQQR…LRFA) and 151 to 257 (TSAK…HAFA). Residue Thr237 is modified to Phosphothreonine. 4 Spectrin repeats span residues 281 to 391 (RLME…WLLN), 401 to 506 (HLAE…ALER), 516 to 627 (QLHL…SLQE), and 637 to 740 (RLRR…EVET). EF-hand domains follow at residues 753 to 788 (EQMN…MGYD) and 789 to 824 (LGEA…ETAD). Ca(2+)-binding residues include Asp766, Asn770, Asp777, Asp802, Asn804, and Thr808.

This sequence belongs to the alpha-actinin family. As to quaternary structure, homodimer; antiparallel. Also forms heterodimers with ACTN3. Interacts with ADAM12, MYOZ1, MYOZ2 and MYOZ3. Interacts via its C-terminal region with the LDB3 PDZ domain. Interacts with XIRP2. Interacts with DST isoform 1 (via N-terminus). Interacts with PARVB. Interacts with SYNPO2. Ubiquitinated by FBXL22, leading to proteasomal degradation. As to expression, expressed in both skeletal and cardiac muscle.

The protein resides in the cytoplasm. The protein localises to the myofibril. Its subcellular location is the sarcomere. It localises to the z line. Functionally, F-actin cross-linking protein which is thought to anchor actin to a variety of intracellular structures. This is a bundling protein. The sequence is that of Alpha-actinin-2 (ACTN2) from Homo sapiens (Human).